A 592-amino-acid chain; its full sequence is Arginine--tRNA ligase (592 aa).

The short motif at 134 to 144 is the 'HIGH' region element; the sequence is ANPTGPLHVGH.

This sequence belongs to the class-I aminoacyl-tRNA synthetase family. In terms of assembly, monomer.

The protein localises to the cytoplasm. The enzyme catalyses tRNA(Arg) + L-arginine + ATP = L-arginyl-tRNA(Arg) + AMP + diphosphate. The chain is Arginine--tRNA ligase from Coxiella burnetii (strain CbuG_Q212) (Coxiella burnetii (strain Q212)).